Here is a 547-residue protein sequence, read N- to C-terminus: Undecaprenyl phosphate-alpha-4-amino-4-deoxy-L-arabinose arabinosyl transferase (547 aa).

Helical transmembrane passes span 1–21, 83–103, 111–131, 174–194, 205–225, 253–273, 286–306, 311–331, 346–366, 378–398, and 408–428; these read MKLTKWALPLFFLLFYLLPLD, FASAAATGLSALLIVWFALQL, FLAGLIYLSLLIVYGIGTYSV, FLTKGFIALAVPVIVIVPYVI, FGPLAMVSAALLAAPWAIAVH, APFWYYLPMGLLGTLPWLGLL, ISPETLYLLAWVVLPLLFFSV, LLTYILPCFAPLAMLLAASAV, AWLNGLFGLICLAVLAVLALS, GALAVAMVIFAGWALLGFIQL, and SALCPMVLAVGLPWALPQSLI.

The protein belongs to the glycosyltransferase 83 family.

The protein localises to the cell inner membrane. The catalysed reaction is 4-amino-4-deoxy-alpha-L-arabinopyranosyl di-trans,octa-cis-undecaprenyl phosphate + lipid IVA = lipid IIA + di-trans,octa-cis-undecaprenyl phosphate.. Its pathway is lipopolysaccharide metabolism; 4-amino-4-deoxy-beta-L-arabinose-lipid A biosynthesis. Its function is as follows. Catalyzes the transfer of the L-Ara4N moiety of the glycolipid undecaprenyl phosphate-alpha-L-Ara4N to lipid A. The modified arabinose is attached to lipid A and is required for resistance to polymyxin and cationic antimicrobial peptides. The chain is Undecaprenyl phosphate-alpha-4-amino-4-deoxy-L-arabinose arabinosyl transferase from Aeromonas salmonicida (strain A449).